The following is a 434-amino-acid chain: Monodehydroascorbate reductase 1, peroxisomal (434 aa).

Residues 13-16 (GGVS), E40, R47, K52, I95, and 146-147 (RE) contribute to the FAD site. NAD(+) is bound by residues 171-177 (GGYIGLE), E195, R201, and G260. 173–177 (YIGLE) serves as a coordination point for NADP(+). NADP(+)-binding residues include R201 and G260. D297 is an FAD binding site. NAD(+) is bound at residue 313-314 (EH). 313 to 314 (EH) provides a ligand contact to NADP(+). V315 contributes to the FAD binding site. Residue R319 coordinates L-ascorbate. Y348 serves as a coordination point for FAD. Y348 serves as a coordination point for NAD(+). Y348 is a binding site for NADP(+). R350 is an L-ascorbate binding site. At S416 the chain carries Phosphoserine.

This sequence belongs to the FAD-dependent oxidoreductase family. FAD serves as cofactor.

The protein resides in the peroxisome matrix. The enzyme catalyses 2 monodehydro-L-ascorbate radical + NADH + H(+) = 2 L-ascorbate + NAD(+). Its function is as follows. Catalyzes the conversion of monodehydroascorbate to ascorbate, oxidizing NADH in the process. The protein is Monodehydroascorbate reductase 1, peroxisomal of Arabidopsis thaliana (Mouse-ear cress).